A 297-amino-acid polypeptide reads, in one-letter code: Probable porphobilinogen deaminase (297 aa).

At C241 the chain carries S-(dipyrrolylmethanemethyl)cysteine.

The protein belongs to the HMBS family. It depends on dipyrromethane as a cofactor.

The catalysed reaction is 4 porphobilinogen + H2O = hydroxymethylbilane + 4 NH4(+). Its pathway is porphyrin-containing compound metabolism; protoporphyrin-IX biosynthesis; coproporphyrinogen-III from 5-aminolevulinate: step 2/4. In terms of biological role, tetrapolymerization of the monopyrrole PBG into the hydroxymethylbilane pre-uroporphyrinogen in several discrete steps. The polypeptide is Probable porphobilinogen deaminase (Pyrobaculum arsenaticum (strain DSM 13514 / JCM 11321 / PZ6)).